A 284-amino-acid chain; its full sequence is Bifunctional protein FolD 2 (284 aa).

NADP(+) is bound by residues Gly166–Ser168 and Ile232.

Belongs to the tetrahydrofolate dehydrogenase/cyclohydrolase family. In terms of assembly, homodimer.

The enzyme catalyses (6R)-5,10-methylene-5,6,7,8-tetrahydrofolate + NADP(+) = (6R)-5,10-methenyltetrahydrofolate + NADPH. It carries out the reaction (6R)-5,10-methenyltetrahydrofolate + H2O = (6R)-10-formyltetrahydrofolate + H(+). Its pathway is one-carbon metabolism; tetrahydrofolate interconversion. Catalyzes the oxidation of 5,10-methylenetetrahydrofolate to 5,10-methenyltetrahydrofolate and then the hydrolysis of 5,10-methenyltetrahydrofolate to 10-formyltetrahydrofolate. This is Bifunctional protein FolD 2 from Colwellia psychrerythraea (strain 34H / ATCC BAA-681) (Vibrio psychroerythus).